The primary structure comprises 336 residues: uncharacterized protein (336 aa).

It to bacterial alkanal monooxygenase alpha and beta chains.

This is an uncharacterized protein from Bacillus subtilis (strain 168).